Consider the following 350-residue polypeptide: Small ribosomal subunit biogenesis GTPase RsgA (350 aa).

The segment covering 1–17 has biased composition (polar residues); sequence MSKNKLSKGQQRRVNAN. Positions 1 to 33 are disordered; that stretch reads MSKNKLSKGQQRRVNANHQRRLKTSKEKPDYDD. The 170-residue stretch at 104–273 folds into the CP-type G domain; sequence TSVLTRPDFY…VIDSPGVREF (170 aa). GTP-binding positions include 160–163 and 214–222; these read NKID and GQSGVGKSS. Residues Cys297, Cys302, His304, and Cys310 each coordinate Zn(2+).

It belongs to the TRAFAC class YlqF/YawG GTPase family. RsgA subfamily. In terms of assembly, monomer. Associates with 30S ribosomal subunit, binds 16S rRNA. Zn(2+) is required as a cofactor.

The protein resides in the cytoplasm. Its function is as follows. One of several proteins that assist in the late maturation steps of the functional core of the 30S ribosomal subunit. Helps release RbfA from mature subunits. May play a role in the assembly of ribosomal proteins into the subunit. Circularly permuted GTPase that catalyzes slow GTP hydrolysis, GTPase activity is stimulated by the 30S ribosomal subunit. This is Small ribosomal subunit biogenesis GTPase RsgA from Escherichia fergusonii (strain ATCC 35469 / DSM 13698 / CCUG 18766 / IAM 14443 / JCM 21226 / LMG 7866 / NBRC 102419 / NCTC 12128 / CDC 0568-73).